Consider the following 645-residue polypeptide: UPF0313 protein CLK_3381 (645 aa).

One can recognise a Radical SAM core domain in the interval 295 to 566 (AIKEVKFSIT…RMQRALLQFS (272 aa)). [4Fe-4S] cluster contacts are provided by C309, C313, and C316. The interval 598-645 (NKPYKKSHKKNNVKNNNNHYNKNNNYNKNKDVSKKNKKNSLSKHKKRK) is disordered. The segment covering 600 to 609 (PYKKSHKKNN) has biased composition (basic residues). Positions 610–624 (VKNNNNHYNKNNNYN) are enriched in low complexity. Over residues 632–645 (KNKKNSLSKHKKRK) the composition is skewed to basic residues.

The protein belongs to the UPF0313 family. [4Fe-4S] cluster serves as cofactor.

This chain is UPF0313 protein CLK_3381, found in Clostridium botulinum (strain Loch Maree / Type A3).